The primary structure comprises 78 residues: Probable Fe(2+)-trafficking protein (78 aa).

It belongs to the Fe(2+)-trafficking protein family. In terms of assembly, monomer.

In terms of biological role, could be a mediator in iron transactions between iron acquisition and iron-requiring processes, such as synthesis and/or repair of Fe-S clusters in biosynthetic enzymes. The sequence is that of Probable Fe(2+)-trafficking protein from Buchnera aphidicola subsp. Schizaphis graminum (strain Sg).